Reading from the N-terminus, the 389-residue chain is Gibberellin 20 oxidase 2 (389 aa).

Residues 1-17 (MVAEHPTPPQPHQPPPM) are compositionally biased toward pro residues. Residues 1–23 (MVAEHPTPPQPHQPPPMDSTAGS) are disordered. Residues 224 to 324 (DSSSIMRCNY…RRSLAFFLCP (101 aa)) form the Fe2OG dioxygenase domain. Fe cation is bound by residues histidine 249, aspartate 251, and histidine 305. The active site involves arginine 315.

Belongs to the iron/ascorbate-dependent oxidoreductase family. GA20OX subfamily. Fe cation serves as cofactor. L-ascorbate is required as a cofactor.

The catalysed reaction is gibberellin A12 + 2 2-oxoglutarate + 3 O2 + H(+) = gibberellin A9 + 2 succinate + 3 CO2 + 2 H2O. It catalyses the reaction gibberellin A53 + 2 2-oxoglutarate + 3 O2 + H(+) = gibberellin A20 + 2 succinate + 3 CO2 + 2 H2O. Its function is as follows. Key oxidase enzyme in the biosynthesis of gibberellin that catalyzes the conversion of GA53 to GA20 via a three-step oxidation at C-20 of the GA skeleton. This chain is Gibberellin 20 oxidase 2 (20ox2), found in Oryza sativa subsp. indica (Rice).